Here is a 500-residue protein sequence, read N- to C-terminus: NAD(P)H-quinone oxidoreductase chain 4, chloroplastic (500 aa).

The next 15 membrane-spanning stretches (helical) occupy residues 4 to 24, 35 to 55, 87 to 107, 113 to 130, 134 to 154, 167 to 187, 211 to 231, 242 to 262, 272 to 292, 305 to 325, 330 to 350, 364 to 384, 386 to 406, 411 to 431, and 462 to 482; these read FPWLTIIVVFPISAGSLMLFL, YTICICILELLLTTYAFCYNF, IGTILLTGFITTLATLAAFPV, LFHFLMLAMYSGQIGSFS, LLLFFIMWELELIPVYLLLAM, FILYTAGSSIFLLIGVLGISL, ILFYIGFLIAFAVKSPIIPLH, HYSTCMLLAGILLKMGAYGLV, AHSMFSPWLMVVGTIQIIYAA, IAYSSVSHMGFIIIGISSITD, GAILQIISHGFIGAALFFLAG, MGGMAISIPKIFTMFTILSMA, LALPGMSGFIAELIVFFGIIT, FLIFKILIIFVMAIGMILTPI, and LFLSISILIPIIGIGIYPDFV.

Belongs to the complex I subunit 4 family.

It localises to the plastid. The protein localises to the chloroplast thylakoid membrane. The enzyme catalyses a plastoquinone + NADH + (n+1) H(+)(in) = a plastoquinol + NAD(+) + n H(+)(out). It carries out the reaction a plastoquinone + NADPH + (n+1) H(+)(in) = a plastoquinol + NADP(+) + n H(+)(out). The protein is NAD(P)H-quinone oxidoreductase chain 4, chloroplastic of Capsella bursa-pastoris (Shepherd's purse).